Here is a 119-residue protein sequence, read N- to C-terminus: Holo-[acyl-carrier-protein] synthase (119 aa).

Residues D8 and E58 each coordinate Mg(2+).

The protein belongs to the P-Pant transferase superfamily. AcpS family. The cofactor is Mg(2+).

Its subcellular location is the cytoplasm. It carries out the reaction apo-[ACP] + CoA = holo-[ACP] + adenosine 3',5'-bisphosphate + H(+). Functionally, transfers the 4'-phosphopantetheine moiety from coenzyme A to a Ser of acyl-carrier-protein. This chain is Holo-[acyl-carrier-protein] synthase, found in Halalkalibacterium halodurans (strain ATCC BAA-125 / DSM 18197 / FERM 7344 / JCM 9153 / C-125) (Bacillus halodurans).